The following is a 473-amino-acid chain: Photosystem II CP43 reaction center protein (473 aa).

The propeptide occupies 1–14; the sequence is MKTLYSLRRFYPVE. T15 is subject to N-acetylthreonine. Position 15 is a phosphothreonine (T15). 5 helical membrane passes run 69 to 93, 134 to 155, 178 to 200, 255 to 275, and 291 to 312; these read LFEV…PHLA, LIGP…KDRS, KALY…RKIT, KPFA…LSYS, and WFNN…ASQA. E367 is a binding site for [CaMn4O5] cluster. A helical transmembrane segment spans residues 447–471; the sequence is RARAAAAGFEKGIDRDFEPVLSMNP.

This sequence belongs to the PsbB/PsbC family. PsbC subfamily. As to quaternary structure, PSII is composed of 1 copy each of membrane proteins PsbA, PsbB, PsbC, PsbD, PsbE, PsbF, PsbH, PsbI, PsbJ, PsbK, PsbL, PsbM, PsbT, PsbX, PsbY, PsbZ, Psb30/Ycf12, at least 3 peripheral proteins of the oxygen-evolving complex and a large number of cofactors. It forms dimeric complexes. The cofactor is Binds multiple chlorophylls and provides some of the ligands for the Ca-4Mn-5O cluster of the oxygen-evolving complex. It may also provide a ligand for a Cl- that is required for oxygen evolution. PSII binds additional chlorophylls, carotenoids and specific lipids..

Its subcellular location is the plastid. It is found in the chloroplast thylakoid membrane. In terms of biological role, one of the components of the core complex of photosystem II (PSII). It binds chlorophyll and helps catalyze the primary light-induced photochemical processes of PSII. PSII is a light-driven water:plastoquinone oxidoreductase, using light energy to abstract electrons from H(2)O, generating O(2) and a proton gradient subsequently used for ATP formation. This chain is Photosystem II CP43 reaction center protein, found in Cycas taitungensis (Prince sago).